The sequence spans 357 residues: Histidinol-phosphate aminotransferase (357 aa).

The residue at position 212 (K212) is an N6-(pyridoxal phosphate)lysine.

It belongs to the class-II pyridoxal-phosphate-dependent aminotransferase family. Histidinol-phosphate aminotransferase subfamily. Homodimer. It depends on pyridoxal 5'-phosphate as a cofactor.

It carries out the reaction L-histidinol phosphate + 2-oxoglutarate = 3-(imidazol-4-yl)-2-oxopropyl phosphate + L-glutamate. It functions in the pathway amino-acid biosynthesis; L-histidine biosynthesis; L-histidine from 5-phospho-alpha-D-ribose 1-diphosphate: step 7/9. This is Histidinol-phosphate aminotransferase from Pectobacterium carotovorum subsp. carotovorum (strain PC1).